Here is a 491-residue protein sequence, read N- to C-terminus: Glutamyl-tRNA(Gln) amidotransferase subunit A (491 aa).

Residues K79 and S158 each act as charge relay system in the active site. Residue S182 is the Acyl-ester intermediate of the active site.

This sequence belongs to the amidase family. GatA subfamily. In terms of assembly, heterotrimer of A, B and C subunits.

It carries out the reaction L-glutamyl-tRNA(Gln) + L-glutamine + ATP + H2O = L-glutaminyl-tRNA(Gln) + L-glutamate + ADP + phosphate + H(+). Functionally, allows the formation of correctly charged Gln-tRNA(Gln) through the transamidation of misacylated Glu-tRNA(Gln) in organisms which lack glutaminyl-tRNA synthetase. The reaction takes place in the presence of glutamine and ATP through an activated gamma-phospho-Glu-tRNA(Gln). This chain is Glutamyl-tRNA(Gln) amidotransferase subunit A, found in Maricaulis maris (strain MCS10) (Caulobacter maris).